A 186-amino-acid chain; its full sequence is Spermidine N(1)-acetyltransferase (186 aa).

Residues 7 to 167 (VKLRPLERED…NAIRMCIFQH (161 aa)) enclose the N-acetyltransferase domain. Residues M30, E35, E43, and 51 to 54 (HIHD) contribute to the spermine site. Residue E35 participates in Mg(2+) binding. Spermidine contacts are provided by E35 and E43. E76 is a Mg(2+) binding site. Spermine is bound at residue 85–87 (EFQ). Residues 88–90 (III), 95–101 (QGKGLAT), and 128–137 (NEKAIHIYRK) each bind acetyl-CoA. Y135 serves as the catalytic Proton donor.

Belongs to the acetyltransferase family. In terms of assembly, homododecamer.

It localises to the cytoplasm. It catalyses the reaction an alkane-alpha,omega-diamine + acetyl-CoA = an N-acetylalkane-alpha,omega-diamine + CoA + H(+). The catalysed reaction is spermidine + acetyl-CoA = N(1)-acetylspermidine + CoA + H(+). It carries out the reaction spermidine + acetyl-CoA = N(8)-acetylspermidine + CoA + H(+). The enzyme catalyses spermine + acetyl-CoA = N(1)-acetylspermine + CoA + H(+). The protein operates within amine and polyamine degradation; spermidine degradation. Its pathway is amine and polyamine degradation; spermine degradation. Its function is as follows. Involved in the protection against polyamine toxicity by regulating their concentration. Catalyzes the transfer of an acetyl group from acetyl coenzyme A (AcCoA) to the primary amino groups of spermidine to yield N(1)- and N(8)-acetylspermidine. It can also use spermine. The polypeptide is Spermidine N(1)-acetyltransferase (speG) (Escherichia coli O157:H7).